The following is a 164-amino-acid chain: S-ribosylhomocysteine lyase (164 aa).

Fe cation contacts are provided by H54, H58, and C128.

This sequence belongs to the LuxS family. In terms of assembly, homodimer. The cofactor is Fe cation.

The enzyme catalyses S-(5-deoxy-D-ribos-5-yl)-L-homocysteine = (S)-4,5-dihydroxypentane-2,3-dione + L-homocysteine. Involved in the synthesis of autoinducer 2 (AI-2) which is secreted by bacteria and is used to communicate both the cell density and the metabolic potential of the environment. The regulation of gene expression in response to changes in cell density is called quorum sensing. Catalyzes the transformation of S-ribosylhomocysteine (RHC) to homocysteine (HC) and 4,5-dihydroxy-2,3-pentadione (DPD). This chain is S-ribosylhomocysteine lyase, found in Campylobacter jejuni subsp. jejuni serotype O:2 (strain ATCC 700819 / NCTC 11168).